The chain runs to 512 residues: Zinc metalloprotease mde10 (512 aa).

An N-terminal signal peptide occupies residues 1–15; it reads MRLVLLFSCVLAVSS. N35 is a glycosylation site (N-linked (GlcNAc...) asparagine). The region spanning 65–306 is the Peptidase M12B domain; sequence QTLWIGVVAD…KYVSLSCLSK (242 aa). H229 serves as a coordination point for Zn(2+). Residue E230 is part of the active site. Zn(2+)-binding residues include H233 and H239. 2 disulfide bridges follow: C246/C254 and C374/C394. In terms of domain architecture, Disintegrin spans 315 to 402; it reads LGTCGNGIVE…KCPVDENWDD (88 aa). N432 carries an N-linked (GlcNAc...) asparagine glycan.

Requires Zn(2+) as cofactor. Post-translationally, glycosylated.

The protein localises to the endoplasmic reticulum. It localises to the spore wall. Functionally, has a role in the development of the spore envelope. This Schizosaccharomyces pombe (strain 972 / ATCC 24843) (Fission yeast) protein is Zinc metalloprotease mde10 (mde10).